The chain runs to 205 residues: NADH-quinone oxidoreductase subunit J (205 aa).

The next 5 membrane-spanning stretches (helical) occupy residues methionine 1–leucine 21, valine 26–leucine 46, leucine 54–leucine 74, leucine 89–leucine 109, and phenylalanine 142–threonine 162.

Belongs to the complex I subunit 6 family.

The protein resides in the cell membrane. The enzyme catalyses a quinone + NADH + 5 H(+)(in) = a quinol + NAD(+) + 4 H(+)(out). Functionally, NDH-1 shuttles electrons from NADH, via FMN and iron-sulfur (Fe-S) centers, to quinones in the respiratory chain. Couples the redox reaction to proton translocation (for every two electrons transferred, four hydrogen ions are translocated across the cytoplasmic membrane), and thus conserves the redox energy in a proton gradient. This is NADH-quinone oxidoreductase subunit J (nuoJ) from Rickettsia prowazekii (strain Madrid E).